A 377-amino-acid chain; its full sequence is Nitric oxide reductase FlRd-NAD(+) reductase (377 aa).

Belongs to the FAD-dependent oxidoreductase family. The cofactor is FAD.

The protein localises to the cytoplasm. The enzyme catalyses 2 reduced [nitric oxide reductase rubredoxin domain] + NAD(+) + H(+) = 2 oxidized [nitric oxide reductase rubredoxin domain] + NADH. It participates in nitrogen metabolism; nitric oxide reduction. Functionally, one of at least two accessory proteins for anaerobic nitric oxide (NO) reductase. Reduces the rubredoxin moiety of NO reductase. The polypeptide is Nitric oxide reductase FlRd-NAD(+) reductase (Escherichia coli O17:K52:H18 (strain UMN026 / ExPEC)).